Reading from the N-terminus, the 421-residue chain is Phosphoribosylamine--glycine ligase (421 aa).

An ATP-grasp domain is found at 108 to 314 (KEIMVKYNVP…FAQNIDDIMM (207 aa)). 134–195 (IEEQGAPIVV…EEFLDGEEFS (62 aa)) provides a ligand contact to ATP. Residues E284 and N286 each coordinate Mg(2+).

Belongs to the GARS family. The cofactor is Mg(2+). Mn(2+) serves as cofactor.

It carries out the reaction 5-phospho-beta-D-ribosylamine + glycine + ATP = N(1)-(5-phospho-beta-D-ribosyl)glycinamide + ADP + phosphate + H(+). Its pathway is purine metabolism; IMP biosynthesis via de novo pathway; N(1)-(5-phospho-D-ribosyl)glycinamide from 5-phospho-alpha-D-ribose 1-diphosphate: step 2/2. The sequence is that of Phosphoribosylamine--glycine ligase from Streptococcus pyogenes serotype M1.